A 556-amino-acid chain; its full sequence is Formate--tetrahydrofolate ligase (556 aa).

ATP is bound at residue threonine 65 to serine 72.

This sequence belongs to the formate--tetrahydrofolate ligase family.

It carries out the reaction (6S)-5,6,7,8-tetrahydrofolate + formate + ATP = (6R)-10-formyltetrahydrofolate + ADP + phosphate. Its pathway is one-carbon metabolism; tetrahydrofolate interconversion. The chain is Formate--tetrahydrofolate ligase from Streptococcus equi subsp. zooepidemicus (strain H70).